The chain runs to 94 residues: MLRLDLQFFASKKGVGSTKNGRDSESKRLGAKRADGQFVTGGSILYRQRGTKIYPGENVGRGGDDTLFAKIDGTVKFERFGRDRKKVSVYPAAQ.

The propeptide occupies 1–9; that stretch reads MLRLDLQFF.

The protein belongs to the bacterial ribosomal protein bL27 family. Post-translationally, the N-terminus is cleaved by ribosomal processing cysteine protease Prp.

This chain is Large ribosomal subunit protein bL27, found in Bacillus pumilus (strain SAFR-032).